The following is a 587-amino-acid chain: ATP-dependent lipid A-core flippase (587 aa).

5 helical membrane-spanning segments follow: residues 31–51, 68–88, 145–165, 169–189, and 259–279; these read LIAS…LIYL, LKIM…TNFI, GSLI…AVMF, WELT…ITIV, and VQII…TPLI. The 284-residue stretch at 32–315 folds into the ABC transmembrane type-1 domain; it reads IASGIALVFN…LTNVNSQFQR (284 aa). The 237-residue stretch at 347-583 folds into the ABC transporter domain; the sequence is LEFKNVSFAY…NGAYKQLYSM (237 aa). ATP is bound at residue 381–388; that stretch reads GRSGSGKS.

Belongs to the ABC transporter superfamily. Lipid exporter (TC 3.A.1.106) family. Homodimer.

Its subcellular location is the cell inner membrane. It catalyses the reaction ATP + H2O + lipid A-core oligosaccharideSide 1 = ADP + phosphate + lipid A-core oligosaccharideSide 2.. In terms of biological role, involved in lipopolysaccharide (LPS) biosynthesis. Translocates lipid A-core from the inner to the outer leaflet of the inner membrane. Transmembrane domains (TMD) form a pore in the inner membrane and the ATP-binding domain (NBD) is responsible for energy generation. In Haemophilus influenzae (strain 86-028NP), this protein is ATP-dependent lipid A-core flippase.